Consider the following 292-residue polypeptide: Phosphatidylglycerol--prolipoprotein diacylglyceryl transferase (292 aa).

3 helical membrane passes run 18–38 (LFGVTFALRWYALAYIAGLLI), 67–87 (LLTWVILGVILGGRLGFVLFY), and 105–125 (GGMSFHGGFLGVMTALVAFCL). An a 1,2-diacyl-sn-glycero-3-phospho-(1'-sn-glycerol)-binding site is contributed by Arg-150. A run of 3 helical transmembrane segments spans residues 193–213 (QIYEAGLEGILLFTVLSLLVW), 222–242 (GSVSGMFLAGYGATRFLVEFV), and 266–286 (GLTMGQILSLPMILLGLYLIL).

It belongs to the Lgt family.

The protein localises to the cell inner membrane. It catalyses the reaction L-cysteinyl-[prolipoprotein] + a 1,2-diacyl-sn-glycero-3-phospho-(1'-sn-glycerol) = an S-1,2-diacyl-sn-glyceryl-L-cysteinyl-[prolipoprotein] + sn-glycerol 1-phosphate + H(+). It participates in protein modification; lipoprotein biosynthesis (diacylglyceryl transfer). Functionally, catalyzes the transfer of the diacylglyceryl group from phosphatidylglycerol to the sulfhydryl group of the N-terminal cysteine of a prolipoprotein, the first step in the formation of mature lipoproteins. In Cereibacter sphaeroides (strain ATCC 17023 / DSM 158 / JCM 6121 / CCUG 31486 / LMG 2827 / NBRC 12203 / NCIMB 8253 / ATH 2.4.1.) (Rhodobacter sphaeroides), this protein is Phosphatidylglycerol--prolipoprotein diacylglyceryl transferase.